Reading from the N-terminus, the 1107-residue chain is Voltage-gated delayed rectifier potassium channel KCNH8 (1107 aa).

The Cytoplasmic portion of the chain corresponds to 1-225 (MPVMKGLLAP…HFSTFKAGWD (225 aa)). Residues 18-90 (IATRFDGTHS…LQIEKSLEEK (73 aa)) enclose the PAS domain. In terms of domain architecture, PAC spans 93–145 (FKGEIMFYKKNGSPFWCLLDIVPIKNEKGDVVLFLASFKDITDTKVKITPEDK). The chain crosses the membrane as a helical span at residues 226-246 (WLILLATFYVAVTVPYNVCFI). The Extracellular portion of the chain corresponds to 247-255 (GNDDLSTTR). A helical membrane pass occupies residues 256-276 (STTVSDIAVEILFIIDIILNF). At 277–298 (RTTYVSKSGQVIFEARSICIHY) the chain is on the cytoplasmic side. Residues 299-319 (VTTWFIIDLIAALPFDLLYAF) form a helical membrane-spanning segment. The N-linked (GlcNAc...) asparagine glycan is linked to Asn320. The Extracellular segment spans residues 320-327 (NVTVVSLV). Residues 328–348 (HLLKTVRLLRLLRLLQKLDRY) form a helical; Voltage-sensor membrane-spanning segment. Topologically, residues 349–357 (SQHSTIVLT) are cytoplasmic. A helical transmembrane segment spans residues 358-378 (LLMSMFALLAHWMACIWYVIG). Over 379-419 (KMEREDNSLLKWEVGWLHELGKRLESPYYGNNTLGGPSIRS) the chain is Extracellular. Residue Asn409 is glycosylated (N-linked (GlcNAc...) asparagine). The segment at residues 420–440 (AYIAALYFTLSSLTSVGFGNV) is an intramembrane region (pore-forming). Residues 434–439 (SVGFGN) carry the Selectivity filter motif. Topologically, residues 441–448 (SANTDAEK) are extracellular. The helical transmembrane segment at 449–469 (IFSICTMLIGALMHALVFGNV) threads the bilayer. Over 470–1107 (TAIIQRMYSR…EVKDNKAINV (638 aa)) the chain is Cytoplasmic. The interval 551 to 668 (LFECASRGCL…HKFVEDIQHD (118 aa)) is cNMP-binding domain. Polar residues predominate over residues 686-702 (SNKSMVSQSEPKGNGNI). Disordered stretches follow at residues 686–742 (SNKS…NKKV), 764–791 (HSPIRVSRSNSPKTKQEIDPPNHNKRKE), 818–847 (EDGNSSEESQTFDFGSERIRSEPRISPPLG), and 961–989 (VDPSSVGSSPQRTGAHEQNPADSELYHSP). The span at 710-724 (VEDEEEEEEGEEEEA) shows a compositional bias: acidic residues. Residues 961-972 (VDPSSVGSSPQR) show a composition bias toward polar residues.

Belongs to the potassium channel family. H (Eag) (TC 1.A.1.20) subfamily. Kv12.1/KCNH8 sub-subfamily. As to quaternary structure, the potassium channel is probably composed of a homo- or heterotetrameric complex of pore-forming alpha subunits that can associate with modulating beta subunits. In terms of tissue distribution, primarily expressed in the nervous system.

The protein resides in the membrane. The catalysed reaction is K(+)(in) = K(+)(out). Pore-forming (alpha) subunit of a voltage-gated delayed rectifier potassium channel that mediates outward-rectifying potassium currents. Elicits a slowly activating, non-inactivating and slowly deactivation outwards potassium current at depolarizating voltages from -30 mV to +50mV. Shows no obvious change in the activation rate from different holding potentials. Activation is strongly dependent on the pH of the external solution. This chain is Voltage-gated delayed rectifier potassium channel KCNH8, found in Homo sapiens (Human).